The chain runs to 240 residues: UDP-2,3-diacylglucosamine hydrolase (240 aa).

5 residues coordinate Mn(2+): D8, H10, D41, N79, and H114. Residue 79–80 coordinates substrate; it reads NR. Residues D122, S160, N164, K167, and H195 each coordinate substrate. H195 and H197 together coordinate Mn(2+).

It belongs to the LpxH family. Requires Mn(2+) as cofactor.

It localises to the cell inner membrane. The catalysed reaction is UDP-2-N,3-O-bis[(3R)-3-hydroxytetradecanoyl]-alpha-D-glucosamine + H2O = 2-N,3-O-bis[(3R)-3-hydroxytetradecanoyl]-alpha-D-glucosaminyl 1-phosphate + UMP + 2 H(+). It participates in glycolipid biosynthesis; lipid IV(A) biosynthesis; lipid IV(A) from (3R)-3-hydroxytetradecanoyl-[acyl-carrier-protein] and UDP-N-acetyl-alpha-D-glucosamine: step 4/6. Hydrolyzes the pyrophosphate bond of UDP-2,3-diacylglucosamine to yield 2,3-diacylglucosamine 1-phosphate (lipid X) and UMP by catalyzing the attack of water at the alpha-P atom. Involved in the biosynthesis of lipid A, a phosphorylated glycolipid that anchors the lipopolysaccharide to the outer membrane of the cell. In Shigella sonnei (strain Ss046), this protein is UDP-2,3-diacylglucosamine hydrolase.